A 233-amino-acid polypeptide reads, in one-letter code: Sugar fermentation stimulation protein homolog (233 aa).

Belongs to the SfsA family.

In Pyrobaculum neutrophilum (strain DSM 2338 / JCM 9278 / NBRC 100436 / V24Sta) (Thermoproteus neutrophilus), this protein is Sugar fermentation stimulation protein homolog.